The primary structure comprises 317 residues: NADH-quinone oxidoreductase subunit H 1 (317 aa).

8 helical membrane passes run 7–27 (IWVNLILILAVLFAFAAMLSW), 74–94 (AVFVLAPAIVAVTTLLAFAVV), 107–127 (IGVLFFLAMSSLGVYSIVLGG), 147–167 (LSYEVFMGLALMGVVMLAGSF), 179–199 (LWFCIPQILGLATFAVAGIAE), 230–250 (FFIGEYVGITLISAMIVTLFF), 257–277 (VLPPLAWFLLKTFIVIICFVL), and 297–317 (VMLPVTLVNLLLTGAVVLSVA).

This sequence belongs to the complex I subunit 1 family. In terms of assembly, NDH-1 is composed of 14 different subunits. Subunits NuoA, H, J, K, L, M, N constitute the membrane sector of the complex.

It is found in the cell inner membrane. The enzyme catalyses a quinone + NADH + 5 H(+)(in) = a quinol + NAD(+) + 4 H(+)(out). NDH-1 shuttles electrons from NADH, via FMN and iron-sulfur (Fe-S) centers, to quinones in the respiratory chain. The immediate electron acceptor for the enzyme in this species is believed to be ubiquinone. Couples the redox reaction to proton translocation (for every two electrons transferred, four hydrogen ions are translocated across the cytoplasmic membrane), and thus conserves the redox energy in a proton gradient. This subunit may bind ubiquinone. The chain is NADH-quinone oxidoreductase subunit H 1 from Nitrosospira multiformis (strain ATCC 25196 / NCIMB 11849 / C 71).